The sequence spans 861 residues: Replication factor C subunit 1 (861 aa).

The tract at residues M1–N103 is disordered. Positions R16–S28 are enriched in polar residues. The residue at position 38 (T38) is a Phosphothreonine. The residue at position 40 (S40) is a Phosphoserine. T63 is modified (phosphothreonine). A BRCT domain is found at G153–A243. Residues T299, C311, G353–T361, and N456 contribute to the ATP site. Residues S788–A861 form a disordered region. Positions D803 to Q823 are enriched in acidic residues. Short sequence motifs (nuclear localization signal) lie at residues K830 to L834 and K855 to K860. A compositionally biased stretch (basic residues) spans K836–A861.

This sequence belongs to the activator 1 large subunit family. In terms of assembly, replication factor C (RFC) is a heteropentamer of subunits RFC1, RFC2, RFC3, RFC4 and RFC5 and forms a complex with POL30/PCNA in the presence of ATP. Interacts with ECO1 and POL30/PCNA.

It is found in the nucleus. Its function is as follows. Component of the ATP-dependent clamp loader RFC complex for the POL30/PCNA homotrimer DNA clamp. During a clamp loading circle, the RFC:clamp complex binds to DNA and the recognition of the double-stranded/single-stranded junction stimulates ATP hydrolysis by RFC. The complex presumably provides bipartite ATP sites in which one subunit supplies a catalytic site for hydrolysis of ATP bound to the neighboring subunit. Dissociation of RFC from the clamp leaves the clamp encircling DNA. Replication factor C (RFC or activator 1) complex acts during elongation of primed DNA templates by DNA polymerase delta and epsilon. RFC has an essential but redundant activity in sister chromatid cohesion establishment. In Saccharomyces cerevisiae (strain ATCC 204508 / S288c) (Baker's yeast), this protein is Replication factor C subunit 1 (RFC1).